Consider the following 241-residue polypeptide: Superantigen-like protein 13 (241 aa).

The signal sequence occupies residues 1–26; the sequence is MNNNITKKIILSTTLLLLGTASTQFP.

This sequence belongs to the staphylococcal/streptococcal toxin family. In terms of assembly, interacts with host FPR2; this interaction promotes neutrophil chemotaxis.

Acts as a pathogen alarming molecule by acting on host neutrophil chemotactic factors FPR2. Plays a role of chemoattractant and induces degranulation and oxidative burst in neutrophils. This is Superantigen-like protein 13 from Staphylococcus aureus (strain Newman).